Consider the following 242-residue polypeptide: UPF0273 protein MJ1359 (242 aa).

The KaiC domain maps to 2 to 242; that stretch reads KRVKTGIPGM…VYPDKVLKLR (241 aa). 29–36 is an ATP binding site; the sequence is GGPGTGKS.

It belongs to the UPF0273 family.

The polypeptide is UPF0273 protein MJ1359 (Methanocaldococcus jannaschii (strain ATCC 43067 / DSM 2661 / JAL-1 / JCM 10045 / NBRC 100440) (Methanococcus jannaschii)).